We begin with the raw amino-acid sequence, 1132 residues long: Phosphatidylinositide phosphatase SAC2 (1132 aa).

Residues 167 to 518 (LKMFMDSESF…GDSISRQYAG (352 aa)) form the SAC domain. Residues 593-760 (RSHQELISQL…KSSKPHEDII (168 aa)) form the hSac2 domain. Phosphoserine is present on residues Ser827 and Ser830. A disordered region spans residues 846-875 (ESDGDMSSDNDSYHSDEFLTNSKSDEDRQL). Residues 856–874 (DSYHSDEFLTNSKSDEDRQ) show a composition bias toward basic and acidic residues. Ser878, Ser881, Ser907, and Ser910 each carry phosphoserine. Disordered stretches follow at residues 923-942 (VAHG…KSPS) and 974-1017 (LSET…LDVS). A Phosphoserine modification is found at Ser1103.

As to quaternary structure, homodimer. Interacts with OCRL and RAB5A. Interacts with INPP5B and INPP4A. Interacts with STAT3; the interaction is independent of STAT3 'Tyr-705' phosphorylation status. As to expression, ubiquitous. Highly expressed in brain.

The protein localises to the membrane. The protein resides in the clathrin-coated pit. Its subcellular location is the early endosome. It is found in the recycling endosome. The enzyme catalyses a myo-inositol phosphate + H2O = myo-inositol + phosphate. In terms of biological role, inositol 4-phosphatase which mainly acts on phosphatidylinositol 4-phosphate. May be functionally linked to OCRL, which converts phosphatidylinositol 4,5-bisphosphate to phosphatidylinositol, for a sequential dephosphorylation of phosphatidylinositol 4,5-bisphosphate at the 5 and 4 position of inositol, thus playing an important role in the endocytic recycling. Regulator of TF:TFRC and integrins recycling pathway, is also involved in cell migration mechanisms. Modulates AKT/GSK3B pathway by decreasing AKT and GSK3B phosphorylation. Negatively regulates STAT3 signaling pathway through inhibition of STAT3 phosphorylation and translocation to the nucleus. Functionally important modulator of cardiac myocyte size and of the cardiac response to stress. May play a role as negative regulator of axon regeneration after central nervous system injuries. The chain is Phosphatidylinositide phosphatase SAC2 from Homo sapiens (Human).